The primary structure comprises 477 residues: Glutamate--tRNA ligase (477 aa).

The short motif at 12-22 (PSPTGMFHVGG) is the 'HIGH' region element. 4 residues coordinate Zn(2+): Cys-106, Cys-108, Cys-128, and Asp-130. Residues 238-242 (KLSKR) carry the 'KMSKS' region motif. Residue Lys-241 coordinates ATP.

The protein belongs to the class-I aminoacyl-tRNA synthetase family. Glutamate--tRNA ligase type 1 subfamily. As to quaternary structure, monomer. Requires Zn(2+) as cofactor.

It localises to the cytoplasm. The catalysed reaction is tRNA(Glu) + L-glutamate + ATP = L-glutamyl-tRNA(Glu) + AMP + diphosphate. Catalyzes the attachment of glutamate to tRNA(Glu) in a two-step reaction: glutamate is first activated by ATP to form Glu-AMP and then transferred to the acceptor end of tRNA(Glu). The chain is Glutamate--tRNA ligase from Thermobifida fusca (strain YX).